We begin with the raw amino-acid sequence, 552 residues long: Putative transport protein APJL_0985 (552 aa).

Transmembrane regions (helical) follow at residues 4–24 (IAII…IGHI), 29–49 (VGLG…CTHL), 65–85 (FGLI…FFAS), 95–115 (GFAV…HKLF), and 161–181 (IAYP…RIIF). RCK C-terminal domains lie at 190–275 (QEFD…ILGE) and 277–360 (ADVS…IIGD). Transmembrane regions (helical) follow at residues 370-390 (MLPI…PLYL), 403-425 (GGPL…YWFM), 438-458 (IVLF…DTLL), 463-483 (LAWM…TGFV), 492-512 (YLSL…LAFA), and 529-549 (VYPL…ILLW).

This sequence belongs to the AAE transporter (TC 2.A.81) family. YidE subfamily.

The protein resides in the cell membrane. This chain is Putative transport protein APJL_0985, found in Actinobacillus pleuropneumoniae serotype 3 (strain JL03).